The sequence spans 427 residues: Cholecystokinin receptor type A (427 aa).

Over 1-41 the chain is Extracellular; the sequence is MDAVASLLGNASGIPPPCELGLDNETLFCLDQPPPSKEWQP. Residues Asn10 and Asn24 are each glycosylated (N-linked (GlcNAc...) asparagine). Cys18 and Cys29 are oxidised to a cystine. A helical membrane pass occupies residues 42 to 67; the sequence is AVQILLYSLIFLLSVLGNTLVITVLI. Over 68 to 77 the chain is Cytoplasmic; the sequence is RNKRMRTVTN. Residues 78–104 traverse the membrane as a helical segment; that stretch reads IFLLSLAISDLMLCLFCMPFNLIPNLL. At 105–115 the chain is on the extracellular side; that stretch reads KDFIFGSALCK. An intrachain disulfide couples Cys114 to Cys196. A helical transmembrane segment spans residues 116 to 137; the sequence is TTTYLMGTSVSVSTLNLVAISL. Residues 138 to 157 lie on the Cytoplasmic side of the membrane; the sequence is ERYGAICKPLQSRVWQTKSH. The helical transmembrane segment at 158–178 threads the bilayer; it reads ALKVIAATWCLSFAIMTPYPI. The Extracellular segment spans residues 179–210; it reads YSNLVPFTKTNNQTANMCRFLLPSDVMQQAWH. Asn190 carries an N-linked (GlcNAc...) asparagine glycan. Residues 211–234 form a helical membrane-spanning segment; that stretch reads TFLLLILFLIPGIVMMVAYGMISL. Over 235–312 the chain is Cytoplasmic; it reads ELYQGIKFDA…TLMAKKRVIR (78 aa). A helical transmembrane segment spans residues 313 to 333; sequence MLMVIVVLFFLCWMPIFSANA. Residues 334–348 lie on the Extracellular side of the membrane; it reads WRAYDTVSAERRLSG. Residues 349–372 form a helical membrane-spanning segment; that stretch reads TPISFILLLSYTSSCVNPIIYCFM. At 373 to 427 the chain is on the cytoplasmic side; that stretch reads NRRFRLGFMATFPCCPNPGPPGPRAEAGEEEEGRTTRASLSRYSYSHMSASAPPS. A lipid anchor (S-palmitoyl cysteine) is attached at Cys386. Residues 391 to 427 are disordered; it reads GPPGPRAEAGEEEEGRTTRASLSRYSYSHMSASAPPS. The span at 411–421 shows a compositional bias: polar residues; sequence SLSRYSYSHMS.

Belongs to the G-protein coupled receptor 1 family.

The protein localises to the cell membrane. Its function is as follows. Receptor for cholecystokinin. Mediates pancreatic growth and enzyme secretion, smooth muscle contraction of the gall bladder and stomach. Has a 1000-fold higher affinity for CCK rather than for gastrin. It modulates feeding and dopamine-induced behavior in the central and peripheral nervous system. This receptor mediates its action by association with G proteins that activate a phosphatidylinositol-calcium second messenger system. This is Cholecystokinin receptor type A (CCKAR) from Oryctolagus cuniculus (Rabbit).